Consider the following 336-residue polypeptide: MYDEERIVSGDSFEGEDLNEQSLRPQTFDQYIGQKLLKDEISVYIQAAKQREESLDHVLLYGPPGLGKTTLAIVIANEMGVKIKTTTGPAIEKPGDLVALLNELEPGDVLFIDEIHRLPKNVEEILYSAMEDYFIDIIVGQGPTAHPVHFPLPPFTLVGATTRAGLLSAPLRARFGIVGHMEYYNEVDLSQIIKRSAQILSTGIDDEGAHEIARRSRGTPRVANRLLKRVRDFAEVKHKDKIDTEIVQFALDLLRVDKVGLDRTDRKLLKAMIELYDGGPVGLNTIAANIGEESDTIADMIEPYLMQIGFIKRTPRGRMVTLAAYEHLGIKYNKEG.

The segment at 1 to 184 is large ATPase domain (RuvB-L); it reads MYDEERIVSG…FGIVGHMEYY (184 aa). ATP is bound by residues Leu-23, Arg-24, Gly-65, Lys-68, Thr-69, Thr-70, 131–133, Arg-174, Tyr-184, and Arg-221; that span reads EDY. Thr-69 provides a ligand contact to Mg(2+). A small ATPAse domain (RuvB-S) region spans residues 185 to 255; the sequence is NEVDLSQIIK…IVQFALDLLR (71 aa). The segment at 258 to 336 is head domain (RuvB-H); sequence KVGLDRTDRK…HLGIKYNKEG (79 aa). The DNA site is built by Arg-313 and Arg-318.

The protein belongs to the RuvB family. In terms of assembly, homohexamer. Forms an RuvA(8)-RuvB(12)-Holliday junction (HJ) complex. HJ DNA is sandwiched between 2 RuvA tetramers; dsDNA enters through RuvA and exits via RuvB. An RuvB hexamer assembles on each DNA strand where it exits the tetramer. Each RuvB hexamer is contacted by two RuvA subunits (via domain III) on 2 adjacent RuvB subunits; this complex drives branch migration. In the full resolvosome a probable DNA-RuvA(4)-RuvB(12)-RuvC(2) complex forms which resolves the HJ.

Its subcellular location is the cytoplasm. It carries out the reaction ATP + H2O = ADP + phosphate + H(+). Functionally, the RuvA-RuvB-RuvC complex processes Holliday junction (HJ) DNA during genetic recombination and DNA repair, while the RuvA-RuvB complex plays an important role in the rescue of blocked DNA replication forks via replication fork reversal (RFR). RuvA specifically binds to HJ cruciform DNA, conferring on it an open structure. The RuvB hexamer acts as an ATP-dependent pump, pulling dsDNA into and through the RuvAB complex. RuvB forms 2 homohexamers on either side of HJ DNA bound by 1 or 2 RuvA tetramers; 4 subunits per hexamer contact DNA at a time. Coordinated motions by a converter formed by DNA-disengaged RuvB subunits stimulates ATP hydrolysis and nucleotide exchange. Immobilization of the converter enables RuvB to convert the ATP-contained energy into a lever motion, pulling 2 nucleotides of DNA out of the RuvA tetramer per ATP hydrolyzed, thus driving DNA branch migration. The RuvB motors rotate together with the DNA substrate, which together with the progressing nucleotide cycle form the mechanistic basis for DNA recombination by continuous HJ branch migration. Branch migration allows RuvC to scan DNA until it finds its consensus sequence, where it cleaves and resolves cruciform DNA. The chain is Holliday junction branch migration complex subunit RuvB from Ligilactobacillus salivarius (strain UCC118) (Lactobacillus salivarius).